The primary structure comprises 490 residues: Glutamate--tRNA ligase (490 aa).

A 'HIGH' region motif is present at residues 13–23; the sequence is PSPTGTPHVGL. The 'KMSKS' region motif lies at 257 to 261; the sequence is KLSKR. Lysine 260 serves as a coordination point for ATP.

It belongs to the class-I aminoacyl-tRNA synthetase family. Glutamate--tRNA ligase type 1 subfamily. In terms of assembly, monomer.

The protein localises to the cytoplasm. It carries out the reaction tRNA(Glu) + L-glutamate + ATP = L-glutamyl-tRNA(Glu) + AMP + diphosphate. Functionally, catalyzes the attachment of glutamate to tRNA(Glu) in a two-step reaction: glutamate is first activated by ATP to form Glu-AMP and then transferred to the acceptor end of tRNA(Glu). The chain is Glutamate--tRNA ligase from Mycobacterium tuberculosis (strain ATCC 25177 / H37Ra).